A 469-amino-acid polypeptide reads, in one-letter code: RuvB-like helicase 2 (469 aa).

An ATP-binding site is contributed by 76–83; the sequence is GPPSTGKT.

The protein belongs to the RuvB family. May form heterododecamers with RVB1. Component of the SWR1 chromatin remodeling complex, the INO80 chromatin remodeling complex, and of the R2TP complex.

It is found in the nucleus. It catalyses the reaction ATP + H2O = ADP + phosphate + H(+). Its function is as follows. DNA helicase which participates in several chromatin remodeling complexes, including the SWR1 and the INO80 complexes. The SWR1 complex mediates the ATP-dependent exchange of histone H2A for the H2A variant HZT1 leading to transcriptional regulation of selected genes by chromatin remodeling. The INO80 complex remodels chromatin by shifting nucleosomes and is involved in DNA repair. Also involved in pre-rRNA processing. The protein is RuvB-like helicase 2 (rvb2) of Aspergillus fumigatus (strain ATCC MYA-4609 / CBS 101355 / FGSC A1100 / Af293) (Neosartorya fumigata).